A 1110-amino-acid chain; its full sequence is MSSSTNGHSQSNFAKFAFNIYGTLSTTSSSTPQSHEISPSPSSSLSSSRSRRNKQSFRAATGHRLTYQCDKETISLSQLNYPLQVGGYGTELHSIVIGGKNYLRLLCISESQQRIIDDINLLESKSIYNSRVGSKLININTIKTYESTIATGLSNGVVSVYKISPNGQGKQTGRFSDHKRTINSLDFIESENQLLSGSQDGTIKLWDLRSSSSKPSITIQASMRSDPIRACQYSPHSSVKNKMCVLSVHDSGALCKFDLRSTGGNGNIYSPEKKWNLHTGPALSLHIHPEKEYVITGGRDQRISVFNYGEGQSNSSTPENTIITYGPVLKVRWSSYSNISQSGDEFEEAQSSLSPSKINPLYNYDIACSYLNDDPTVAIYNLSRKYVPKQIIHSKKPIQNFIWARNGHRDRNIWTLTKSNTFNSYNLDQIDEYDVSRPLDDLNNVAVAWDNNGNFSMANQDKYDFELDDNDIYDRPEGSSEAEVASHGMDPEESGNAIHFHNSATTSPVEKAALARSYTHNPMSAIQLPTKSPLPIGRNGTGFLGHDMSLPNISTRPKLTRNTSQTTQDSSVSYGSAYPIPQSANSNTTLHMKRNIISNSTKSSNTSAYVIPVVLPIVSNDEFVFKKLSSEYLVKLPDGFTMIDVCLLNASTAASVNSNRTCQVWRLLAVSLQEHFDSQKAPMTIEELEKQQMEQNENEEGVPNATVESATDSMPAKSVSSVLGNFVESYKTNSSFGTGSQINKPGKSVKSRTSSGVNLMDKINLASRTSSFSKTSFKFKEKEGVDEDGVPEDKEKQERGKAEDQETENDKKSIHSNQEPIVIRTTRHSKVEDLDDENLNIANSMAMKSSPTSVGISLPSSHTFSSSIASSPQPIRGQIPPKQQLATTRESPVHNWLDQKKNELFRGRNVVPAISGLSLALKSSNNGDEKLLTRAWKFKNLLRKSLDYAMLQGDVIFCSTAAILFYEFAEDTISEYEYLEWVSLYIDILQKKKLFVTAINILNSTAGSIKSKLQKIYSVDLDLRFYCSNCETLLVNEKSQMSQKGEFGYWYCDECNKLQSKCVYCNEPCKGLAVVVGLKCGHQGHFGCLKEWFIQDENMECPGGCDYQIL.

Residues 27–57 (TSSSTPQSHEISPSPSSSLSSSRSRRNKQSF) form a disordered region. Residues 38-48 (SPSPSSSLSSS) show a composition bias toward low complexity. WD repeat units lie at residues 132–171 (VGSKLININTIKTYESTIATGLSNGVVSVYKISPNGQGKQ), 177–216 (DHKRTINSLDFIESENQLLSGSQDGTIKLWDLRSSSSKPS), 223–267 (MRSD…GNGN), 277–316 (LHTGPALSLHIHPEKEYVITGGRDQRISVFNYGEGQSNSS), 348–390 (EAQS…VPKQ), 393–426 (HSKKPIQNFIWARNGHRDRNIWTLTKSNTFNSYN), and 439–483 (LDDL…SEAE). Polar residues predominate over residues 552–574 (NISTRPKLTRNTSQTTQDSSVSY). The interval 552–575 (NISTRPKLTRNTSQTTQDSSVSYG) is disordered. One copy of the WD 8 repeat lies at 637 to 675 (PDGFTMIDVCLLNASTAASVNSNRTCQVWRLLAVSLQEH). Disordered regions lie at residues 692-714 (QMEQNENEEGVPNATVESATDSM), 734-755 (SSFGTGSQINKPGKSVKSRTSS), and 779-819 (FKEK…SNQE). Residues 734 to 743 (SSFGTGSQIN) show a composition bias toward polar residues. A compositionally biased stretch (basic and acidic residues) spans 791–813 (PEDKEKQERGKAEDQETENDKKS). The WD 9 repeat unit spans residues 860–906 (SSHTFSSSIASSPQPIRGQIPPKQQLATTRESPVHNWLDQKKNELFR). The segment at 1062–1105 (CVYCNEPCKGLAVVVGLKCGHQGHFGCLKEWFIQDENMECPGGC) adopts an RING-type; degenerate zinc-finger fold.

This sequence belongs to the WD repeat RTC1 family.

It localises to the vacuole. Functionally, may be involved in a process influencing telomere capping. This chain is Restriction of telomere capping protein 1 (RTC1), found in Candida tropicalis (strain ATCC MYA-3404 / T1) (Yeast).